Consider the following 147-residue polypeptide: Large ribosomal subunit protein uL13 (147 aa).

It belongs to the universal ribosomal protein uL13 family. Part of the 50S ribosomal subunit.

In terms of biological role, this protein is one of the early assembly proteins of the 50S ribosomal subunit, although it is not seen to bind rRNA by itself. It is important during the early stages of 50S assembly. The protein is Large ribosomal subunit protein uL13 of Streptomyces avermitilis (strain ATCC 31267 / DSM 46492 / JCM 5070 / NBRC 14893 / NCIMB 12804 / NRRL 8165 / MA-4680).